The chain runs to 323 residues: Transaldolase (323 aa).

Catalysis depends on K133, which acts as the Schiff-base intermediate with substrate.

The protein belongs to the transaldolase family. Type 1 subfamily. As to quaternary structure, monomer.

The enzyme catalyses D-sedoheptulose 7-phosphate + D-glyceraldehyde 3-phosphate = D-erythrose 4-phosphate + beta-D-fructose 6-phosphate. The protein operates within carbohydrate degradation; pentose phosphate pathway; D-glyceraldehyde 3-phosphate and beta-D-fructose 6-phosphate from D-ribose 5-phosphate and D-xylulose 5-phosphate (non-oxidative stage): step 2/3. Its function is as follows. Transaldolase important for the balance of metabolites in the pentose-phosphate pathway. Involved in xylose fermentation to ethanol. This Fusarium oxysporum f. sp. lycopersici (strain 4287 / CBS 123668 / FGSC 9935 / NRRL 34936) (Fusarium vascular wilt of tomato) protein is Transaldolase.